The chain runs to 339 residues: D-erythrose-4-phosphate dehydrogenase (339 aa).

NAD(+)-binding positions include 12 to 13 (RI) and R81. Residues 154–156 (SCT), R200, 213–214 (TK), and R236 each bind substrate. The active-site Nucleophile is C155. N318 is an NAD(+) binding site.

This sequence belongs to the glyceraldehyde-3-phosphate dehydrogenase family. Epd subfamily. As to quaternary structure, homotetramer.

The protein localises to the cytoplasm. The catalysed reaction is D-erythrose 4-phosphate + NAD(+) + H2O = 4-phospho-D-erythronate + NADH + 2 H(+). It participates in cofactor biosynthesis; pyridoxine 5'-phosphate biosynthesis; pyridoxine 5'-phosphate from D-erythrose 4-phosphate: step 1/5. Catalyzes the NAD-dependent conversion of D-erythrose 4-phosphate to 4-phosphoerythronate. This Escherichia fergusonii (strain ATCC 35469 / DSM 13698 / CCUG 18766 / IAM 14443 / JCM 21226 / LMG 7866 / NBRC 102419 / NCTC 12128 / CDC 0568-73) protein is D-erythrose-4-phosphate dehydrogenase.